The chain runs to 228 residues: tRNA (guanine-N(1)-)-methyltransferase (228 aa).

S-adenosyl-L-methionine-binding positions include glycine 111 and 130–135; that span reads IGDFVL.

It belongs to the RNA methyltransferase TrmD family. As to quaternary structure, homodimer.

The protein resides in the cytoplasm. The catalysed reaction is guanosine(37) in tRNA + S-adenosyl-L-methionine = N(1)-methylguanosine(37) in tRNA + S-adenosyl-L-homocysteine + H(+). In terms of biological role, specifically methylates guanosine-37 in various tRNAs. The sequence is that of tRNA (guanine-N(1)-)-methyltransferase from Ureaplasma parvum serovar 3 (strain ATCC 27815 / 27 / NCTC 11736).